Consider the following 206-residue polypeptide: High frequency lysogenization protein HflD homolog (206 aa).

Belongs to the HflD family.

Its subcellular location is the cytoplasm. It is found in the cell inner membrane. The chain is High frequency lysogenization protein HflD homolog from Pseudomonas syringae pv. tomato (strain ATCC BAA-871 / DC3000).